A 289-amino-acid polypeptide reads, in one-letter code: Bifunctional protein FolD (289 aa).

NADP(+)-binding positions include 165 to 167 (GAS) and Ser-190.

Belongs to the tetrahydrofolate dehydrogenase/cyclohydrolase family. Homodimer.

It carries out the reaction (6R)-5,10-methylene-5,6,7,8-tetrahydrofolate + NADP(+) = (6R)-5,10-methenyltetrahydrofolate + NADPH. The catalysed reaction is (6R)-5,10-methenyltetrahydrofolate + H2O = (6R)-10-formyltetrahydrofolate + H(+). It participates in one-carbon metabolism; tetrahydrofolate interconversion. Catalyzes the oxidation of 5,10-methylenetetrahydrofolate to 5,10-methenyltetrahydrofolate and then the hydrolysis of 5,10-methenyltetrahydrofolate to 10-formyltetrahydrofolate. The polypeptide is Bifunctional protein FolD (Ralstonia nicotianae (strain ATCC BAA-1114 / GMI1000) (Ralstonia solanacearum)).